A 126-amino-acid chain; its full sequence is Gas vesicle protein J (126 aa).

It belongs to the gas vesicle GvpA family. As to quaternary structure, interacts with GvpA.

It localises to the gas vesicle. Its function is as follows. A minor component of the gas vesicle, might be involved in nucleating gas vesicle formation. Gas vesicles (GV) are hollow, gas filled proteinaceous nanostructures. During planktonic growth they allow positioning of the organism at a favorable depth for light or nutrient acquisition. This is Gas vesicle protein J from Pseudanabaena galeata (strain PCC 6901).